Here is a 128-residue protein sequence, read N- to C-terminus: Sulfurtransferase TusD (128 aa).

The active-site Cysteine persulfide intermediate is the Cys-78.

Belongs to the DsrE/TusD family. In terms of assembly, heterohexamer, formed by a dimer of trimers. The hexameric TusBCD complex contains 2 copies each of TusB, TusC and TusD. The TusBCD complex interacts with TusE.

It localises to the cytoplasm. In terms of biological role, part of a sulfur-relay system required for 2-thiolation of 5-methylaminomethyl-2-thiouridine (mnm(5)s(2)U) at tRNA wobble positions. Accepts sulfur from TusA and transfers it in turn to TusE. The chain is Sulfurtransferase TusD from Citrobacter koseri (strain ATCC BAA-895 / CDC 4225-83 / SGSC4696).